Reading from the N-terminus, the 444-residue chain is Tol-Pal system protein TolB (444 aa).

The signal sequence occupies residues 1–19 (MRNIIYFILSLLFSVTSYA).

It belongs to the TolB family. In terms of assembly, the Tol-Pal system is composed of five core proteins: the inner membrane proteins TolA, TolQ and TolR, the periplasmic protein TolB and the outer membrane protein Pal. They form a network linking the inner and outer membranes and the peptidoglycan layer.

Its subcellular location is the periplasm. Part of the Tol-Pal system, which plays a role in outer membrane invagination during cell division and is important for maintaining outer membrane integrity. This is Tol-Pal system protein TolB from Rickettsia rickettsii (strain Iowa).